The chain runs to 145 residues: Ribosome-binding factor A (145 aa).

The segment covering 122–132 has biased composition (basic and acidic residues); sequence KVQRDLESAPR. Residues 122–145 are disordered; the sequence is KVQRDLESAPREDDEGEPASSSRD.

Belongs to the RbfA family. Monomer. Binds 30S ribosomal subunits, but not 50S ribosomal subunits or 70S ribosomes.

It is found in the cytoplasm. Functionally, one of several proteins that assist in the late maturation steps of the functional core of the 30S ribosomal subunit. Associates with free 30S ribosomal subunits (but not with 30S subunits that are part of 70S ribosomes or polysomes). Required for efficient processing of 16S rRNA. May interact with the 5'-terminal helix region of 16S rRNA. This chain is Ribosome-binding factor A, found in Methylorubrum extorquens (strain CM4 / NCIMB 13688) (Methylobacterium extorquens).